A 205-amino-acid polypeptide reads, in one-letter code: Nucleoside triphosphate pyrophosphatase (205 aa).

Asp76 serves as the catalytic Proton acceptor.

This sequence belongs to the Maf family. It depends on a divalent metal cation as a cofactor.

It is found in the cytoplasm. The enzyme catalyses a ribonucleoside 5'-triphosphate + H2O = a ribonucleoside 5'-phosphate + diphosphate + H(+). The catalysed reaction is a 2'-deoxyribonucleoside 5'-triphosphate + H2O = a 2'-deoxyribonucleoside 5'-phosphate + diphosphate + H(+). Its function is as follows. Nucleoside triphosphate pyrophosphatase. May have a dual role in cell division arrest and in preventing the incorporation of modified nucleotides into cellular nucleic acids. This is Nucleoside triphosphate pyrophosphatase from Orientia tsutsugamushi (strain Boryong) (Rickettsia tsutsugamushi).